The primary structure comprises 394 residues: Lipid-A-disaccharide synthase (394 aa).

It belongs to the LpxB family.

It catalyses the reaction 2-N,3-O-bis[(3R)-3-hydroxytetradecanoyl]-alpha-D-glucosaminyl 1-phosphate + UDP-2-N,3-O-bis[(3R)-3-hydroxytetradecanoyl]-alpha-D-glucosamine = lipid A disaccharide (E. coli) + UDP + H(+). The enzyme catalyses a lipid X + a UDP-2-N,3-O-bis[(3R)-3-hydroxyacyl]-alpha-D-glucosamine = a lipid A disaccharide + UDP + H(+). The protein operates within glycolipid biosynthesis; lipid IV(A) biosynthesis; lipid IV(A) from (3R)-3-hydroxytetradecanoyl-[acyl-carrier-protein] and UDP-N-acetyl-alpha-D-glucosamine: step 5/6. In terms of biological role, condensation of UDP-2,3-diacylglucosamine and 2,3-diacylglucosamine-1-phosphate to form lipid A disaccharide, a precursor of lipid A, a phosphorylated glycolipid that anchors the lipopolysaccharide to the outer membrane of the cell. The protein is Lipid-A-disaccharide synthase of Yersinia pestis.